Reading from the N-terminus, the 289-residue chain is Palmitoyl-protein thioesterase 3 (289 aa).

An N-terminal signal peptide occupies residues 1 to 20 (MRILSSLILLIALAIALVSA). The active site involves Ser97. N-linked (GlcNAc...) asparagine glycosylation is found at Asn189 and Asn195. Residues Asp210 and His266 contribute to the active site. The N-linked (GlcNAc...) asparagine glycan is linked to Asn281.

This sequence belongs to the palmitoyl-protein thioesterase family.

The protein resides in the lysosome. The catalysed reaction is S-hexadecanoyl-L-cysteinyl-[protein] + H2O = L-cysteinyl-[protein] + hexadecanoate + H(+). Its function is as follows. Removes thioester-linked fatty acyl groups such as palmitate from modified cysteine residues in proteins or peptides during lysosomal degradation. This Dictyostelium discoideum (Social amoeba) protein is Palmitoyl-protein thioesterase 3 (ppt3).